The primary structure comprises 621 residues: Chaperone protein HtpG (621 aa).

The interval 1-341 (MSNQEYTFQT…SEDLPLNVSR (341 aa)) is a; substrate-binding. The b stretch occupies residues 342 to 547 (EILQQNKILA…GDEQNAMMAN (206 aa)). Residues 548–621 (FMRQMGQSVP…RLNSVLLKAL (74 aa)) form a c region.

Belongs to the heat shock protein 90 family. As to quaternary structure, homodimer.

It is found in the cytoplasm. Molecular chaperone. Has ATPase activity. This Helicobacter pylori (strain HPAG1) protein is Chaperone protein HtpG.